Consider the following 1107-residue polypeptide: Unconventional myosin-Ib (1107 aa).

Positions 15–701 constitute a Myosin motor domain; sequence IGVGDMVLLE…TLFQLEDLRK (687 aa). Phosphoserine is present on Ser-60. Residue 108-115 participates in ATP binding; the sequence is GESGAGKT. A Glycyl lysine isopeptide (Lys-Gly) (interchain with G-Cter in SUMO1); alternate cross-link involves residue Lys-287. Residue Lys-287 forms a Glycyl lysine isopeptide (Lys-Gly) (interchain with G-Cter in SUMO2); alternate linkage. The tract at residues 592–599 is actin-binding; sequence YIRCIKPN. 5 consecutive IQ domains span residues 704-727, 728-749, 750-778, 780-807, and 808-837; these read LEDLATLIQKIYRGWKCRTHFLLM, KRSQVVIAAWYRRYAQQKRYQQ, IKSSALVIQSYIRGWKARKILRELKHQKR, KEAATTIAAYWHGTQARRELKRLKEEAR, and RKHAVAVIWAYWLGLKVRREYRKFFRANAG. In terms of domain architecture, TH1 spans 923 to 1107; sequence KALYPSSVGQ…NNRLLEVAVP (185 aa).

It belongs to the TRAFAC class myosin-kinesin ATPase superfamily. Myosin family. In terms of tissue distribution, prominent expression is seen in the brain, lung and liver. It is also expressed in the heart and testis. A high level expression is seen in virtually all neurons (but not glia) in the postnatal and adult mouse brain and in neuroblasts of the cerebellar external granular layer.

Motor protein that may participate in process critical to neuronal development and function such as cell migration, neurite outgrowth and vesicular transport. This is Unconventional myosin-Ib (Myo1b) from Mus musculus (Mouse).